Consider the following 860-residue polypeptide: JmjC domain-containing histone demethylation protein 1 (860 aa).

Disordered stretches follow at residues 1–45 (MSEQ…EEGK), 117–212 (STSP…PKRK), and 408–440 (DVKE…GGEI). The segment at 23–116 (PEPCPLCRET…KWYCAPCLAR (94 aa)) adopts a PHD-type zinc-finger fold. 2 stretches are compositionally biased toward basic and acidic residues: residues 183 to 192 (IDMKSEREQQ) and 408 to 433 (DVKE…HLTE). A JmjC domain is found at 416 to 579 (NDSREGSEIR…TQLRLRQIEI (164 aa)). Thr471 serves as a coordination point for substrate. Fe cation contacts are provided by His474 and Asp476. Residue Lys491 participates in substrate binding. His547 provides a ligand contact to Fe cation. Disordered regions lie at residues 744–795 (HPPA…ANEN) and 837–860 (GPKL…DIDH). The segment covering 750-763 (ENRQSPQIETTTVQ) has biased composition (polar residues). Low complexity predominate over residues 767 to 795 (PSTSSSDAISGSGPGASPGASANGGANEN).

The protein belongs to the JHDM1 histone demethylase family. Requires Fe(2+) as cofactor.

It is found in the nucleus. The enzyme catalyses N(6),N(6)-dimethyl-L-lysyl(36)-[histone H3] + 2 2-oxoglutarate + 2 O2 = L-lysyl(36)-[histone H3] + 2 formaldehyde + 2 succinate + 2 CO2. Its function is as follows. Histone demethylase that specifically demethylates 'Lys-36' of histone H3, thereby playing a central role in histone code. In Cryptococcus neoformans var. neoformans serotype D (strain JEC21 / ATCC MYA-565) (Filobasidiella neoformans), this protein is JmjC domain-containing histone demethylation protein 1 (JHD1).